The chain runs to 126 residues: Interleukin-18-binding protein (126 aa).

The N-terminal stretch at 1-16 (MRILFLIAFMYGCVHS) is a signal peptide.

Belongs to the orthopoxvirus OPG022 family.

Its subcellular location is the secreted. In terms of biological role, soluble IL18-binding protein that may modulate the host antiviral response. In Cynomys gunnisoni (Gunnison's prairie dog), this protein is Interleukin-18-binding protein (OPG022).